The following is a 374-amino-acid chain: 3-isopropylmalate dehydrogenase (374 aa).

NAD(+) is bound at residue Gly83–Glu96. Substrate-binding residues include Arg104, Arg114, Arg142, and Asp231. Mg(2+)-binding residues include Asp231, Asp255, and Asp259. An NAD(+)-binding site is contributed by Gly288 to Asn300.

Belongs to the isocitrate and isopropylmalate dehydrogenases family. LeuB type 1 subfamily. In terms of assembly, homodimer. It depends on Mg(2+) as a cofactor. The cofactor is Mn(2+).

It is found in the cytoplasm. It catalyses the reaction (2R,3S)-3-isopropylmalate + NAD(+) = 4-methyl-2-oxopentanoate + CO2 + NADH. It participates in amino-acid biosynthesis; L-leucine biosynthesis; L-leucine from 3-methyl-2-oxobutanoate: step 3/4. Its function is as follows. Catalyzes the oxidation of 3-carboxy-2-hydroxy-4-methylpentanoate (3-isopropylmalate) to 3-carboxy-4-methyl-2-oxopentanoate. The product decarboxylates to 4-methyl-2 oxopentanoate. In Carboxydothermus hydrogenoformans (strain ATCC BAA-161 / DSM 6008 / Z-2901), this protein is 3-isopropylmalate dehydrogenase.